The chain runs to 263 residues: Probable ribosomal RNA small subunit methyltransferase A (263 aa).

5 residues coordinate S-adenosyl-L-methionine: leucine 12, glycine 37, glutamate 58, aspartate 83, and asparagine 100.

Belongs to the class I-like SAM-binding methyltransferase superfamily. rRNA adenine N(6)-methyltransferase family. RsmA subfamily.

The protein localises to the cytoplasm. Functionally, specifically dimethylates two adjacent adenosines in the loop of a conserved hairpin near the 3'-end of 16S rRNA in the 30S particle. May play a critical role in biogenesis of 30S subunits. This Methanococcus maripaludis (strain C5 / ATCC BAA-1333) protein is Probable ribosomal RNA small subunit methyltransferase A.